The primary structure comprises 245 residues: 2,3-bisphosphoglycerate-dependent phosphoglycerate mutase (245 aa).

Substrate is bound by residues 8 to 15 (RHGQSLWN), 21 to 22 (TG), R60, 87 to 90 (ERHY), K98, 114 to 115 (RR), and 183 to 184 (GN). H9 functions as the Tele-phosphohistidine intermediate in the catalytic mechanism. Catalysis depends on E87, which acts as the Proton donor/acceptor.

Belongs to the phosphoglycerate mutase family. BPG-dependent PGAM subfamily.

The enzyme catalyses (2R)-2-phosphoglycerate = (2R)-3-phosphoglycerate. It functions in the pathway carbohydrate degradation; glycolysis; pyruvate from D-glyceraldehyde 3-phosphate: step 3/5. Catalyzes the interconversion of 2-phosphoglycerate and 3-phosphoglycerate. The chain is 2,3-bisphosphoglycerate-dependent phosphoglycerate mutase from Bacillus thuringiensis subsp. konkukian (strain 97-27).